Here is a 387-residue protein sequence, read N- to C-terminus: Putative transmembrane protein At3g54730 (387 aa).

Residues 10–25 (PAPPLLLPSPNPPPCA) are compositionally biased toward pro residues. The interval 10-45 (PAPPLLLPSPNPPPCALPQDLTSLVSPSEPPDPPDP) is disordered. Transmembrane regions (helical) follow at residues 97–117 (VFPL…HPLV), 128–148 (GSNF…ILQF), 154–174 (VMIS…MILL), 186–206 (VLFS…VGLI), 221–241 (IQKL…FLEI), 292–312 (SWCF…YPLE), 335–355 (FSTI…FIFF), and 362–382 (PFVA…LNHF).

The protein localises to the membrane. The polypeptide is Putative transmembrane protein At3g54730 (Arabidopsis thaliana (Mouse-ear cress)).